Consider the following 185-residue polypeptide: ATP synthase subunit delta (185 aa).

It belongs to the ATPase delta chain family. As to quaternary structure, F-type ATPases have 2 components, F(1) - the catalytic core - and F(0) - the membrane proton channel. F(1) has five subunits: alpha(3), beta(3), gamma(1), delta(1), epsilon(1). F(0) has three main subunits: a(1), b(2) and c(10-14). The alpha and beta chains form an alternating ring which encloses part of the gamma chain. F(1) is attached to F(0) by a central stalk formed by the gamma and epsilon chains, while a peripheral stalk is formed by the delta and b chains.

The protein resides in the cell inner membrane. Functionally, f(1)F(0) ATP synthase produces ATP from ADP in the presence of a proton or sodium gradient. F-type ATPases consist of two structural domains, F(1) containing the extramembraneous catalytic core and F(0) containing the membrane proton channel, linked together by a central stalk and a peripheral stalk. During catalysis, ATP synthesis in the catalytic domain of F(1) is coupled via a rotary mechanism of the central stalk subunits to proton translocation. Its function is as follows. This protein is part of the stalk that links CF(0) to CF(1). It either transmits conformational changes from CF(0) to CF(1) or is implicated in proton conduction. This Coxiella burnetii (strain CbuG_Q212) (Coxiella burnetii (strain Q212)) protein is ATP synthase subunit delta.